The chain runs to 1007 residues: Glutamate receptor ionotropic, delta-2 (1007 aa).

A signal peptide spans 1–23 (MEVFPLLLFLSFCWSRTWDLATA). An interaction with CBLN1 homotrimer region spans residues 24–345 (DSIIHIGAIF…NAFHKKLEDR (322 aa)). The Extracellular portion of the chain corresponds to 24–566 (DSIIHIGAIF…DMFACLAPFD (543 aa)). 3 disulfide bridges follow: cysteine 83–cysteine 355, cysteine 99–cysteine 131, and cysteine 298–cysteine 310. An N-linked (GlcNAc...) asparagine glycan is attached at asparagine 293. N-linked (GlcNAc...) asparagine glycosylation is present at asparagine 426. Ca(2+) contacts are provided by glutamate 531, valine 534, and aspartate 535. Residues 567–587 (LSLWACIAGTVLLVGLLVYLL) traverse the membrane as a helical segment. The Cytoplasmic segment spans residues 588-635 (NWLNPPRLQMGSMTSTTLYNSMWFVYGSFVQQGGEVPYTTLATRMMMG). Residues 636–656 (AWWLFALIVISSYTANLAAFL) traverse the membrane as a helical segment. Residues 657–830 (TITRIESSIQ…QKGGALDIKS (174 aa)) lie on the Extracellular side of the membrane. Residues asparagine 713 and asparagine 716 are each glycosylated (N-linked (GlcNAc...) asparagine). Ca(2+)-binding residues include aspartate 753, aspartate 755, and serine 757. A helical transmembrane segment spans residues 831–851 (LAGVFCILAAGIVLSCLIAVL). At 852-1007 (ETWWSRRKGS…GNDPDRGTSI (156 aa)) the chain is on the cytoplasmic side. Serine 883 is subject to Phosphoserine. Phosphothreonine is present on threonine 886. Serine 890 bears the Phosphoserine mark. An interaction with AP4M1 region spans residues 921 to 991 (DFRNTHITTT…MSSIPYQPTP (71 aa)). Residues 1005-1007 (TSI) carry the PDZ-binding motif. A Phosphoserine modification is found at serine 1006.

This sequence belongs to the glutamate-gated ion channel (TC 1.A.10.1) family. GRID2 subfamily. As to quaternary structure, tetramer; dimer of dimers. Interacts with EML2, MAGI2 (via PDZ domains) and AP4M1. Interacts with BECN1, GOPC, GRID2IP, SHANK1 and SHANK2. Interacts with CBLN2, but not with CBLN4. Interacts with CBLN1 (via C1q domain); the interaction is CBLN1-NRX1 complex formation-dependent; CBLN1-binding is calcium-independent; CBLN1 hexamers anchor GRID2 N-terminal domain dimers to monomeric NRXN1 isoform beta; promotes synaptogenesis and mediates the D-Serine-dependent long term depression signals and AMPA receptor endocytosis. In terms of tissue distribution, expressed selectively in cerebellar Purkinje cells where it is localized in dendritic spines.

It localises to the postsynaptic cell membrane. The catalysed reaction is Ca(2+)(in) = Ca(2+)(out). It carries out the reaction Na(+)(in) = Na(+)(out). In terms of biological role, member of the ionotropic glutamate receptor family, which plays a crucial role in synaptic organization and signal transduction in the central nervous system. Although it shares structural features with ionotropic glutamate receptors, does not bind glutamate as a primary ligand. Promotes synaptogenesis and mediates the D-Serine-dependent long term depression signals and AMPA receptor endocytosis of cerebellar parallel fiber-Purkinje cell (PF-PC) synapses through the NRX1B-CBLN1-GRID2 triad complex. In the presence of neurexins and cerebellins, forms cation-selective channels that are proposed to be gated by glycine and D-serine. However, recent research disputes this ligand-gated cation channel activity. Cation-selective ion channel activity can be triggered by GRM1 in Purkinje cells. The chain is Glutamate receptor ionotropic, delta-2 (Grid2) from Mus musculus (Mouse).